We begin with the raw amino-acid sequence, 451 residues long: Phosphoglucosamine mutase (451 aa).

Ser102 functions as the Phosphoserine intermediate in the catalytic mechanism. Ser102, Asp243, Asp245, and Asp247 together coordinate Mg(2+). Residue Ser102 is modified to Phosphoserine.

The protein belongs to the phosphohexose mutase family. The cofactor is Mg(2+). Activated by phosphorylation.

The enzyme catalyses alpha-D-glucosamine 1-phosphate = D-glucosamine 6-phosphate. Functionally, catalyzes the conversion of glucosamine-6-phosphate to glucosamine-1-phosphate. The chain is Phosphoglucosamine mutase from Salinispora arenicola (strain CNS-205).